The primary structure comprises 388 residues: Chalcone synthase LF3 (388 aa).

Cys164 is an active-site residue.

Belongs to the thiolase-like superfamily. Chalcone/stilbene synthases family.

The enzyme catalyses (E)-4-coumaroyl-CoA + 3 malonyl-CoA + 3 H(+) = 2',4,4',6'-tetrahydroxychalcone + 3 CO2 + 4 CoA. It functions in the pathway secondary metabolite biosynthesis; flavonoid biosynthesis. Its function is as follows. The primary product of this enzyme is 4,2',4',6'-tetrahydroxychalcone (also termed naringenin-chalcone or chalcone) which can under specific conditions spontaneously isomerize into naringenin. This Ipomoea batatas (Sweet potato) protein is Chalcone synthase LF3 (CHS-LF3).